Consider the following 68-residue polypeptide: uncharacterized protein (68 aa).

This is an uncharacterized protein from Escherichia coli O6:H1 (strain CFT073 / ATCC 700928 / UPEC).